The chain runs to 215 residues: UPF0502 protein YceH (215 aa).

At Lys80 the chain carries N6-acetyllysine.

It belongs to the UPF0502 family.

This Escherichia coli O81 (strain ED1a) protein is UPF0502 protein YceH.